We begin with the raw amino-acid sequence, 622 residues long: Chaperone protein HscA homolog (622 aa).

The protein belongs to the heat shock protein 70 family.

In terms of biological role, chaperone involved in the maturation of iron-sulfur cluster-containing proteins. Has a low intrinsic ATPase activity which is markedly stimulated by HscB. The sequence is that of Chaperone protein HscA homolog from Acidovorax sp. (strain JS42).